The sequence spans 176 residues: Probable inosine/xanthosine triphosphatase (176 aa).

Asp36 serves as a coordination point for Mg(2+).

It belongs to the YjjX NTPase family. As to quaternary structure, homodimer. The cofactor is Mg(2+). Mn(2+) is required as a cofactor.

The enzyme catalyses XTP + H2O = XDP + phosphate + H(+). It catalyses the reaction ITP + H2O = IDP + phosphate + H(+). Functionally, phosphatase that hydrolyzes non-canonical purine nucleotides such as XTP and ITP to their respective diphosphate derivatives. Probably excludes non-canonical purines from DNA/RNA precursor pool, thus preventing their incorporation into DNA/RNA and avoiding chromosomal lesions. This chain is Probable inosine/xanthosine triphosphatase, found in Saccharolobus islandicus (strain Y.G.57.14 / Yellowstone #1) (Sulfolobus islandicus).